A 253-amino-acid polypeptide reads, in one-letter code: 5'-nucleotidase SurE (253 aa).

Residues Asp8, Asp9, Ser39, and Asn97 each coordinate a divalent metal cation.

This sequence belongs to the SurE nucleotidase family. A divalent metal cation is required as a cofactor.

It localises to the cytoplasm. The catalysed reaction is a ribonucleoside 5'-phosphate + H2O = a ribonucleoside + phosphate. Nucleotidase that shows phosphatase activity on nucleoside 5'-monophosphates. The polypeptide is 5'-nucleotidase SurE (Aeromonas hydrophila subsp. hydrophila (strain ATCC 7966 / DSM 30187 / BCRC 13018 / CCUG 14551 / JCM 1027 / KCTC 2358 / NCIMB 9240 / NCTC 8049)).